A 53-amino-acid polypeptide reads, in one-letter code: MISNYEPLLLLVITCCVLLFNFTISSKTKIDIIFAVQTIVFIWFIFHFVYSAI.

2 consecutive transmembrane segments (helical) span residues 5-25 and 30-50; these read YEPL…FTIS and IDII…HFVY.

Belongs to the orthopoxvirus OPG141 protein family. Not phosphorylated.

The protein resides in the virion membrane. Functionally, protein probably involved in counteracting host defense, since it enhances virulence in vivo. This is Virion membrane protein OPG141 (OPG141) from Cynomys gunnisoni (Gunnison's prairie dog).